Here is a 442-residue protein sequence, read N- to C-terminus: Cell division protein FtsA (442 aa).

The tract at residues 401 to 428 is disordered; sequence VTSYDNDSYDAPEETVYDEPEQKKSDED. Over residues 407-419 the composition is skewed to acidic residues; the sequence is DSYDAPEETVYDE.

Belongs to the FtsA/MreB family. As to quaternary structure, self-interacts. Interacts with FtsZ.

The protein resides in the cell membrane. In terms of biological role, cell division protein that is involved in the assembly of the Z ring. May serve as a membrane anchor for the Z ring. In Enterococcus hirae, this protein is Cell division protein FtsA.